The following is a 118-amino-acid chain: Probable mitochondrial pyruvate carrier 2 (118 aa).

3 helical membrane-spanning segments follow: residues 19–35 (VHFW…LSGI), 50–66 (YAAL…WSLI), and 72–94 (YFNA…RILV).

It belongs to the mitochondrial pyruvate carrier (MPC) (TC 2.A.105) family. The functional 150 kDa pyruvate import complex is a heteromer of mpc1 and mpc2.

The protein resides in the mitochondrion inner membrane. Mediates the uptake of pyruvate into mitochondria. In Schizosaccharomyces pombe (strain 972 / ATCC 24843) (Fission yeast), this protein is Probable mitochondrial pyruvate carrier 2.